The following is a 771-amino-acid chain: Probable glycosyltransferase STELLO1 (771 aa).

Residues 1 to 23 (MLVQDRAAPSPAKPPKSQIRELP) form a disordered region. Residues 1–50 (MLVQDRAAPSPAKPPKSQIRELPTHQQIRRRFSEPKNLDFSTWFSENLSR) lie on the Cytoplasmic side of the membrane. Residues 51–71 (IAVFSLLIVTIVAFFFLYNTT) traverse the membrane as a helical segment. At 72–771 (DTASLLCFQS…EGDPLLMELV (700 aa)) the chain is on the lumenal side. 2 N-linked (GlcNAc...) asparagine glycosylation sites follow: asparagine 242 and asparagine 729.

The protein belongs to the STELLO family. Homo- and heterodimer with STL2. Interacts with CESA1, CESA3, CESA4, CESA6, CESA7 and CESA8, but not with GOT1. Expressed in cells that are expanding or producing secondary cell walls.

It localises to the golgi apparatus membrane. Functionally, probable glycosyltransferase regulating the assembly and trafficking of cellulose synthase complexes. The chain is Probable glycosyltransferase STELLO1 from Arabidopsis thaliana (Mouse-ear cress).